A 54-amino-acid polypeptide reads, in one-letter code: UPF0181 protein APJL_0874 (54 aa).

Belongs to the UPF0181 family.

In Actinobacillus pleuropneumoniae serotype 3 (strain JL03), this protein is UPF0181 protein APJL_0874.